Here is a 114-residue protein sequence, read N- to C-terminus: uncharacterized protein (114 aa).

G2 carries the N-myristoyl glycine; by host lipid modification. A run of 2 helical transmembrane segments spans residues 11–31 (FGLI…KDLL) and 44–64 (GLMW…LVAI). The segment at 73–114 (VNKDSKDPKDKSIEFDDSPIRDGSSGTPDNSNEPTDLSVETS) is disordered. The segment covering 75–92 (KDSKDPKDKSIEFDDSPI) has biased composition (basic and acidic residues). A compositionally biased stretch (polar residues) spans 96–114 (SSGTPDNSNEPTDLSVETS).

It localises to the membrane. This is an uncharacterized protein from Acanthamoeba polyphaga (Amoeba).